We begin with the raw amino-acid sequence, 529 residues long: Neuronal acetylcholine receptor subunit alpha-2 (529 aa).

A signal peptide spans 1 to 26 (MGPSCPVFLSFTKLSLWWLLLTPAGG). Residues 27–56 (EEAKRPPPRAPGDPLSSPSPTALPQGGSHT) form a disordered region. The Extracellular segment spans residues 27–264 (EEAKRPPPRA…VTYAFIIRRL (238 aa)). N-linked (GlcNAc...) asparagine glycans are attached at residues Asn-79 and Asn-129. A disulfide bond links Cys-183 and Cys-197. A glycan (N-linked (GlcNAc...) asparagine) is linked at Asn-235. A disulfide bond links Cys-247 and Cys-248. Helical transmembrane passes span 265–289 (PLFYTINLIIPCLLISCLTVLVFYL), 297–315 (ITLCISVLLSLTVFLLLIT), and 331–352 (YLLFTMIFVTLSIVITVFVLNV). The Cytoplasmic segment spans residues 353–502 (HHRSPSTHTM…WKYVAMVIDR (150 aa)). A helical transmembrane segment spans residues 503–521 (IFLWLFIIVCFLGTIGLFL).

It belongs to the ligand-gated ion channel (TC 1.A.9) family. Acetylcholine receptor (TC 1.A.9.1) subfamily. Alpha-2/CHRNA2 sub-subfamily. In terms of assembly, neuronal AChR is composed of two different types of subunits: alpha and non-alpha (beta). CHRNA2/alpha-2 subunit can be combined to CHRNB2/beta-2 or CHRNB4/beta-4 to give rise to functional receptors. Both CHRNA2:CHRNB2 and CHRNA2:CHRNB4 nAChR complexes are heteropentamers with two subtypes: LS (low agonist sensitivity) with a (CHRNA2)3:(CHRNB2/4)2 and HS (high agonist sensitivity) with a (CHRNA2)2:(CHRNB2/4)3 stoichiometries; the subtypes differ in their subunit binding interfaces which are involved in ligand binding.

It is found in the synaptic cell membrane. It localises to the cell membrane. The enzyme catalyses Ca(2+)(in) = Ca(2+)(out). The catalysed reaction is K(+)(in) = K(+)(out). It carries out the reaction Na(+)(in) = Na(+)(out). In terms of biological role, component of neuronal acetylcholine receptors (nAChRs) that function as pentameric, ligand-gated cation channels with high calcium permeability among other activities. nAChRs are excitatory neurotrasnmitter receptors formed by a collection of nAChR subunits known to mediate synaptic transmission in the nervous system and the neuromuscular junction. Each nAchR subunit confers differential attributes to channel properties, including activation, deactivation and desensitization kinetics, pH sensitivity, cation permeability, and binding to allosteric modulators. CHRNA2 forms heteropentameric neuronal acetylcholine receptors with CHRNB2 and CHRNB4 and plays a role in nicotine dependence. This is Neuronal acetylcholine receptor subunit alpha-2 (CHRNA2) from Pan troglodytes (Chimpanzee).